The sequence spans 300 residues: tRNA dimethylallyltransferase 1 (300 aa).

Residue 10–17 (GPTGVGKT) coordinates ATP. Residue 12 to 17 (TGVGKT) participates in substrate binding. The tract at residues 35–38 (DSRQ) is interaction with substrate tRNA.

This sequence belongs to the IPP transferase family. Monomer. The cofactor is Mg(2+).

The catalysed reaction is adenosine(37) in tRNA + dimethylallyl diphosphate = N(6)-dimethylallyladenosine(37) in tRNA + diphosphate. Catalyzes the transfer of a dimethylallyl group onto the adenine at position 37 in tRNAs that read codons beginning with uridine, leading to the formation of N6-(dimethylallyl)adenosine (i(6)A). The sequence is that of tRNA dimethylallyltransferase 1 from Phocaeicola vulgatus (strain ATCC 8482 / DSM 1447 / JCM 5826 / CCUG 4940 / NBRC 14291 / NCTC 11154) (Bacteroides vulgatus).